Consider the following 101-residue polypeptide: Citrate lyase acyl carrier protein (101 aa).

O-(phosphoribosyl dephospho-coenzyme A)serine is present on serine 14.

The protein belongs to the CitD family. In terms of assembly, oligomer with a subunit composition of (alpha,beta,gamma)6.

It localises to the cytoplasm. Functionally, covalent carrier of the coenzyme of citrate lyase. The chain is Citrate lyase acyl carrier protein from Latilactobacillus sakei subsp. sakei (strain 23K) (Lactobacillus sakei subsp. sakei).